Consider the following 194-residue polypeptide: Phosphoheptose isomerase (194 aa).

The 158-residue stretch at I37 to A194 folds into the SIS domain. N52 to G54 is a binding site for substrate. Zn(2+) contacts are provided by H61 and E65. Residues E65, N93–D94, S119–S121, S124, and Q172 contribute to the substrate site. Residues Q172 and H180 each contribute to the Zn(2+) site.

It belongs to the SIS family. GmhA subfamily. Homotetramer. Requires Zn(2+) as cofactor.

It localises to the cytoplasm. It catalyses the reaction 2 D-sedoheptulose 7-phosphate = D-glycero-alpha-D-manno-heptose 7-phosphate + D-glycero-beta-D-manno-heptose 7-phosphate. The protein operates within carbohydrate biosynthesis; D-glycero-D-manno-heptose 7-phosphate biosynthesis; D-glycero-alpha-D-manno-heptose 7-phosphate and D-glycero-beta-D-manno-heptose 7-phosphate from sedoheptulose 7-phosphate: step 1/1. In terms of biological role, catalyzes the isomerization of sedoheptulose 7-phosphate in D-glycero-D-manno-heptose 7-phosphate. The protein is Phosphoheptose isomerase of Actinobacillus pleuropneumoniae serotype 5b (strain L20).